The chain runs to 546 residues: 2-isopropylmalate synthase (546 aa).

The Pyruvate carboxyltransferase domain occupies 8–271 (ILIFDTTLRD…NSFFKRNPDS (264 aa)). Residues aspartate 17, histidine 208, histidine 210, and asparagine 244 each contribute to the Mn(2+) site. The interval 408-546 (QLCLVQVSCG…NKTFLSNPAN (139 aa)) is regulatory domain.

The protein belongs to the alpha-IPM synthase/homocitrate synthase family. LeuA type 1 subfamily. Homodimer. Mn(2+) serves as cofactor.

The protein localises to the cytoplasm. The catalysed reaction is 3-methyl-2-oxobutanoate + acetyl-CoA + H2O = (2S)-2-isopropylmalate + CoA + H(+). It participates in amino-acid biosynthesis; L-leucine biosynthesis; L-leucine from 3-methyl-2-oxobutanoate: step 1/4. Its function is as follows. Catalyzes the condensation of the acetyl group of acetyl-CoA with 3-methyl-2-oxobutanoate (2-ketoisovalerate) to form 3-carboxy-3-hydroxy-4-methylpentanoate (2-isopropylmalate). This is 2-isopropylmalate synthase from Prochlorococcus marinus (strain MIT 9312).